Consider the following 613-residue polypeptide: Probable potassium transport system protein Kup 1 (613 aa).

The next 12 membrane-spanning stretches (helical) occupy residues 40-60 (VLSMLFWSMTLVVSIKYVVFV), 93-113 (MLLGLLGASMFYGDAVITPAI), 127-147 (PALQPWVLPLSLIVLVGLFLL), 158-178 (LFGPVMLFWFVLLGLIGLFSV), 201-221 (AVQAFIVFGSVFLALTGAEAL), 237-257 (WFYIAMPCLLLNYFGQGALLL), 266-286 (PFFLLMPTWAVAPTIVLATAA), 288-308 (VIASQAVISGAFSMTAQAVHL), 327-347 (IYVPVVNYALLLLVVAVVLAF), 356-376 (AYGIAVTTTMLLTTGLVTVVM), 384-404 (LPAVALLGTVFLAVDLSFFGA), and 409-429 (VAAGGWFPLLLGGLIFFLMVT).

The protein belongs to the HAK/KUP transporter (TC 2.A.72) family.

The protein resides in the cell inner membrane. It carries out the reaction K(+)(in) + H(+)(in) = K(+)(out) + H(+)(out). Transport of potassium into the cell. Likely operates as a K(+):H(+) symporter. This Ralstonia nicotianae (strain ATCC BAA-1114 / GMI1000) (Ralstonia solanacearum) protein is Probable potassium transport system protein Kup 1.